Here is a 570-residue protein sequence, read N- to C-terminus: Urease subunit alpha (570 aa).

In terms of domain architecture, Urease spans 131-570; sequence GGFDAHIHFI…LPMAQRYFLF (440 aa). Residues His-136, His-138, and Lys-219 each coordinate Ni(2+). Lys-219 carries the post-translational modification N6-carboxylysine. Substrate is bound at residue His-221. The Ni(2+) site is built by His-248 and His-274. The active-site Proton donor is the His-322. Asp-362 contributes to the Ni(2+) binding site.

Belongs to the metallo-dependent hydrolases superfamily. Urease alpha subunit family. Heterotrimer of UreA (gamma), UreB (beta) and UreC (alpha) subunits. Three heterotrimers associate to form the active enzyme. The cofactor is Ni cation. Carboxylation allows a single lysine to coordinate two nickel ions.

Its subcellular location is the cytoplasm. The catalysed reaction is urea + 2 H2O + H(+) = hydrogencarbonate + 2 NH4(+). The protein operates within nitrogen metabolism; urea degradation; CO(2) and NH(3) from urea (urease route): step 1/1. This Chelativorans sp. (strain BNC1) protein is Urease subunit alpha.